Reading from the N-terminus, the 195-residue chain is Putative 3-methyladenine DNA glycosylase (195 aa).

Belongs to the DNA glycosylase MPG family.

The protein is Putative 3-methyladenine DNA glycosylase of Synechococcus sp. (strain JA-3-3Ab) (Cyanobacteria bacterium Yellowstone A-Prime).